A 193-amino-acid polypeptide reads, in one-letter code: Ribosomal RNA large subunit methyltransferase E (193 aa).

Residues G49, F51, D69, D86, and D106 each coordinate S-adenosyl-L-methionine. K146 serves as the catalytic Proton acceptor.

The protein belongs to the class I-like SAM-binding methyltransferase superfamily. RNA methyltransferase RlmE family.

It localises to the cytoplasm. It carries out the reaction uridine(2552) in 23S rRNA + S-adenosyl-L-methionine = 2'-O-methyluridine(2552) in 23S rRNA + S-adenosyl-L-homocysteine + H(+). Specifically methylates the uridine in position 2552 of 23S rRNA at the 2'-O position of the ribose in the fully assembled 50S ribosomal subunit. The polypeptide is Ribosomal RNA large subunit methyltransferase E (Brachyspira hyodysenteriae (strain ATCC 49526 / WA1)).